Consider the following 162-residue polypeptide: Phosphopantetheine adenylyltransferase (162 aa).

S11 is a substrate binding site. ATP is bound by residues 11 to 12 (SF) and H19. Residues K43, T75, and R89 each coordinate substrate. ATP is bound by residues 90 to 92 (GLR), E100, and 125 to 131 (YAFLSSS).

This sequence belongs to the bacterial CoaD family. In terms of assembly, homohexamer. Mg(2+) serves as cofactor.

Its subcellular location is the cytoplasm. It catalyses the reaction (R)-4'-phosphopantetheine + ATP + H(+) = 3'-dephospho-CoA + diphosphate. It functions in the pathway cofactor biosynthesis; coenzyme A biosynthesis; CoA from (R)-pantothenate: step 4/5. Its function is as follows. Reversibly transfers an adenylyl group from ATP to 4'-phosphopantetheine, yielding dephospho-CoA (dPCoA) and pyrophosphate. This is Phosphopantetheine adenylyltransferase from Finegoldia magna (strain ATCC 29328 / DSM 20472 / WAL 2508) (Peptostreptococcus magnus).